Reading from the N-terminus, the 305-residue chain is Membrane glycoprotein UL142 (305 aa).

The first 19 residues, 1 to 19 (MRIEWACWLFGYFVSSVGS), serve as a signal peptide directing secretion. Residues 20 to 270 (ERSLSYRYHL…QKTNNTTSPW (251 aa)) are Lumenal-facing. Residues 271–288 (VYAIPMGATATIGAGLYI) traverse the membrane as a helical segment. The Cytoplasmic portion of the chain corresponds to 289-305 (GKHFTPVKFVYEVWRGQ).

As to quaternary structure, interacts with host MICA and ULBP3.

The protein localises to the host endoplasmic reticulum membrane. The protein resides in the host Golgi apparatus membrane. In terms of biological role, participates in the inhibition of the host immune response. Prevents host NK cell-mediated lysis of the infected cell by preventing the KLRK1 ligand 3/ULBP3 trafficking to the cell surface. Also retains another KLRK1 ligand, MHC class I-related chain A/MICA, in the Golgi apparatus to avoid its surface expression. The sequence is that of Membrane glycoprotein UL142 (UL142) from Homo sapiens (Human).